The sequence spans 775 residues: Tyrosine-protein phosphatase non-receptor type 12 (775 aa).

N-acetylmethionine is present on Met1. Residue Ser19 is modified to Phosphoserine. Residues 28 to 293 (FARDFMRLRR…ELVHRAIAQL (266 aa)) form the Tyrosine-protein phosphatase domain. Substrate-binding positions include Asp199, 231–237 (CSAGCGR), and Gln278. Cys231 (phosphocysteine intermediate) is an active-site residue. The tract at residues 322–341 (SSIDSEKQDSPPPKPPRTRS) is disordered. A phosphoserine mark is found at Ser331, Ser434, Ser448, and Ser467. The interval 344 to 437 (VEGDAKEEIL…KLERNLSFEI (94 aa)) is interaction with TGFB1I1. The interval 462–775 (KIKSASSSVV…GPREPPSEWT (314 aa)) is disordered. A Phosphothreonine modification is found at Thr519. Phosphoserine is present on residues Ser550 and Ser567. The span at 558-573 (NHSQTLKTVSSTPNST) shows a compositional bias: polar residues. Thr569 carries the post-translational modification Phosphothreonine. Ser596 carries the post-translational modification Phosphoserine. Thr598 carries the post-translational modification Phosphothreonine. Phosphoserine is present on residues Ser603, Ser606, Ser608, and Ser613. Low complexity predominate over residues 622 to 640 (TSISTASATVSPASSAESA). Phosphoserine is present on Ser673. The segment covering 692–711 (VRPEWHELPNQEWSEQRESE) has biased composition (basic and acidic residues). Ser748 is modified (phosphoserine). Positions 766–775 (GPREPPSEWT) are enriched in basic and acidic residues.

It belongs to the protein-tyrosine phosphatase family. Non-receptor class 4 subfamily. Interacts with PSTPIP1 and TGFB1I1. Interacts with PTK2B/PYK2. Interacts with LPXN. Interacts with SORBS2; this interaction greatly enhances WASF1 dephosphorylation and might mediate partial translocation to focal adhesion sites. Phosphorylated by STK24/MST3 and this results in inhibition of its activity.

It is found in the cytoplasm. Its subcellular location is the cell junction. The protein localises to the focal adhesion. It localises to the cell projection. The protein resides in the podosome. The catalysed reaction is O-phospho-L-tyrosyl-[protein] + H2O = L-tyrosyl-[protein] + phosphate. In terms of biological role, dephosphorylates a range of proteins, and thereby regulates cellular signaling cascades. Dephosphorylates cellular tyrosine kinases, such as ERBB2 and PTK2B/PYK2, and thereby regulates signaling via ERBB2 and PTK2B/PYK2. Selectively dephosphorylates ERBB2 phosphorylated at 'Tyr-1112', 'Tyr-1196', and/or 'Tyr-1248'. The chain is Tyrosine-protein phosphatase non-receptor type 12 (Ptpn12) from Mus musculus (Mouse).